A 204-amino-acid chain; its full sequence is Recombination protein RecR (204 aa).

The C4-type zinc finger occupies 58–75; the sequence is CSICQNVTDRGDDPCSIC. The region spanning 83-181 is the Toprim domain; it reads SKICVVESPP…EVTKIARGIP (99 aa).

This sequence belongs to the RecR family.

Functionally, may play a role in DNA repair. It seems to be involved in an RecBC-independent recombinational process of DNA repair. It may act with RecF and RecO. The sequence is that of Recombination protein RecR from Chlorobium phaeobacteroides (strain BS1).